The primary structure comprises 642 residues: Threonine--tRNA ligase (642 aa).

Positions 1–61 constitute a TGS domain; that stretch reads MPVITITNGL…MQDSKLDIIT (61 aa). Residues 243–534 form a catalytic region; sequence DHRKIGQQLD…LIEEYAGFFP (292 aa). Positions 334, 385, and 511 each coordinate Zn(2+).

Belongs to the class-II aminoacyl-tRNA synthetase family. As to quaternary structure, homodimer. Zn(2+) is required as a cofactor.

The protein localises to the cytoplasm. The enzyme catalyses tRNA(Thr) + L-threonine + ATP = L-threonyl-tRNA(Thr) + AMP + diphosphate + H(+). Its function is as follows. Catalyzes the attachment of threonine to tRNA(Thr) in a two-step reaction: L-threonine is first activated by ATP to form Thr-AMP and then transferred to the acceptor end of tRNA(Thr). Also edits incorrectly charged L-seryl-tRNA(Thr). This Baumannia cicadellinicola subsp. Homalodisca coagulata protein is Threonine--tRNA ligase.